The primary structure comprises 305 residues: tRNA uridine(34) hydroxylase (305 aa).

A Rhodanese domain is found at 125-219 (ADENTVVVDT…YLEEVPREDS (95 aa)). The Cysteine persulfide intermediate role is filled by Cys-179.

Belongs to the TrhO family.

It catalyses the reaction uridine(34) in tRNA + AH2 + O2 = 5-hydroxyuridine(34) in tRNA + A + H2O. In terms of biological role, catalyzes oxygen-dependent 5-hydroxyuridine (ho5U) modification at position 34 in tRNAs. The chain is tRNA uridine(34) hydroxylase from Brucella anthropi (strain ATCC 49188 / DSM 6882 / CCUG 24695 / JCM 21032 / LMG 3331 / NBRC 15819 / NCTC 12168 / Alc 37) (Ochrobactrum anthropi).